We begin with the raw amino-acid sequence, 470 residues long: Desmin (470 aa).

Positions 2-108 (SQAYSSSQRV…QEFLTTRTNE (107 aa)) are head. Serine 7 is modified (phosphoserine; by CDK1). Serine 12 carries the phosphoserine; by AURKB modification. Arginine 16 is subject to Omega-N-methylarginine. Threonine 17 carries the phosphothreonine; by AURKB and ROCK1 modification. Position 28 is a phosphoserine; by CDK1 (serine 28). Serine 31 carries the phosphoserine modification. Serine 32 bears the Phosphoserine; by CDK1 mark. Asymmetric dimethylarginine; alternate is present on arginine 37. Arginine 37 carries the omega-N-methylarginine; alternate modification. The residue at position 45 (serine 45) is a Phosphoserine. At arginine 58 the chain carries ADP-ribosylarginine. Serine 60 is modified (phosphoserine; by AURKB). Serine 68 carries the post-translational modification Phosphoserine. Arginine 70 is subject to Omega-N-methylarginine. Residues threonine 76 and threonine 77 each carry the phosphothreonine; by ROCK1 modification. Serine 81 is modified (phosphoserine). Positions 108–416 (EKVELQELND…KLLEGEESRI (309 aa)) constitute an IF rod domain. Residues 109 to 141 (KVELQELNDRFANYIEKVRFLEQQNAALAAEVN) form a coil 1A region. The interval 142–151 (RLKGREPTRV) is linker 1. A coil 1B region spans residues 152–252 (AELYEEELRE…HEEEIRELQA (101 aa)). The linker 12 stretch occupies residues 253-268 (QLQEQQVQVEMDMSKP). An interaction with NEB region spans residues 268 to 415 (PDLTAALRDI…RKLLEGEESR (148 aa)). Residues 269–287 (DLTAALRDIRAQYETIAAK) are coil 2A. The interval 288–295 (NISEAEEW) is linker 2. A phosphoserine mark is found at serine 290, serine 358, serine 361, and serine 424. Residues 296 to 412 (YKSKVSDLTQ…ATYRKLLEGE (117 aa)) form a coil 2B region. Residues 413 to 470 (ESRINLPIQTYSALNFRETSPEQRGSEVHTKKTVMIKTIETRDGEVVSEATQQQHEVL) form a tail region. The interaction with CRYAB stretch occupies residues 438-453 (SEVHTKKTVMIKTIET).

The protein belongs to the intermediate filament family. In terms of assembly, homomer. Interacts with DST. Interacts with MTM1. Interacts with EPPK1; interaction is dependent of higher-order structure of intermediate filament. Interacts with CRYAB. Interacts with NEB (via nebulin repeats 160-164). Interacts (via rod region) with NEBL (via nebulin repeats 1-5). Interacts with ASB2 isoform 1; the interaction targets DES for proteasomal degradation. Interacts with PLEC isoform 1C. Interacts with PKP1. Interacts with FLII. In terms of processing, ADP-ribosylation prevents ability to form intermediate filaments. Phosphorylation at Ser-7, Ser-28 and Ser-32 by CDK1, phosphorylation at Ser-60 by AURKB and phosphorylation at Thr-76 by ROCK1 contribute to efficient separation of desmin intermediate filaments during mitosis. Post-translationally, ubiquitination by a SCF-like complex containing ASB2 isoform 1 leads to proteasomal degradation.

It is found in the cytoplasm. The protein resides in the myofibril. The protein localises to the sarcomere. Its subcellular location is the z line. It localises to the cell membrane. It is found in the sarcolemma. The protein resides in the nucleus. The protein localises to the cell tip. Its subcellular location is the nucleus envelope. Functionally, muscle-specific type III intermediate filament essential for proper muscular structure and function. Plays a crucial role in maintaining the structure of sarcomeres, inter-connecting the Z-disks and forming the myofibrils, linking them not only to the sarcolemmal cytoskeleton, but also to the nucleus and mitochondria, thus providing strength for the muscle fiber during activity. In adult striated muscle they form a fibrous network connecting myofibrils to each other and to the plasma membrane from the periphery of the Z-line structures. May act as a sarcomeric microtubule-anchoring protein: specifically associates with detyrosinated tubulin-alpha chains, leading to buckled microtubules and mechanical resistance to contraction. Required for nuclear membrane integrity, via anchoring at the cell tip and nuclear envelope, resulting in maintenance of microtubule-derived intracellular mechanical forces. Contributes to the transcriptional regulation of the NKX2-5 gene in cardiac progenitor cells during a short period of cardiomyogenesis and in cardiac side population stem cells in the adult. Plays a role in maintaining an optimal conformation of nebulette (NEB) on heart muscle sarcomeres to bind and recruit cardiac alpha-actin. The polypeptide is Desmin (DES) (Homo sapiens (Human)).